We begin with the raw amino-acid sequence, 136 residues long: Small ribosomal subunit protein uS11c (136 aa).

It belongs to the universal ribosomal protein uS11 family. As to quaternary structure, part of the 30S ribosomal subunit.

It localises to the plastid. This chain is Small ribosomal subunit protein uS11c, found in Epifagus virginiana (Beechdrops).